The primary structure comprises 395 residues: Putative 8-amino-7-oxononanoate synthase (395 aa).

Arginine 23 contacts substrate. Pyridoxal 5'-phosphate is bound at residue 110–111 (GY). Residue histidine 135 coordinates substrate. Pyridoxal 5'-phosphate-binding positions include serine 181, 206-209 (DEAH), and 237-240 (TFSK). Lysine 240 is modified (N6-(pyridoxal phosphate)lysine). Threonine 354 is a binding site for substrate.

This sequence belongs to the class-II pyridoxal-phosphate-dependent aminotransferase family. BioF subfamily. In terms of assembly, homodimer. Requires pyridoxal 5'-phosphate as cofactor.

The catalysed reaction is 6-carboxyhexanoyl-[ACP] + L-alanine + H(+) = (8S)-8-amino-7-oxononanoate + holo-[ACP] + CO2. It functions in the pathway cofactor biosynthesis; biotin biosynthesis. Catalyzes the decarboxylative condensation of pimeloyl-[acyl-carrier protein] and L-alanine to produce 8-amino-7-oxononanoate (AON), [acyl-carrier protein], and carbon dioxide. In Halalkalibacterium halodurans (strain ATCC BAA-125 / DSM 18197 / FERM 7344 / JCM 9153 / C-125) (Bacillus halodurans), this protein is Putative 8-amino-7-oxononanoate synthase (bioF).